The primary structure comprises 80 residues: uncharacterized protein (80 aa).

The N-terminal stretch at 1-15 is a signal peptide; sequence MVKLSFTLRFGDVWV.

This is an uncharacterized protein from Archaeoglobus fulgidus (strain ATCC 49558 / DSM 4304 / JCM 9628 / NBRC 100126 / VC-16).